A 1135-amino-acid polypeptide reads, in one-letter code: Vinculin (1135 aa).

The segment at 2–835 is N-terminal globular head; it reads PVFHTRTIES…GAVAKVREAF (834 aa). Tyrosine 100 is modified (phosphotyrosine). The talin-interaction stretch occupies residues 168–208; it reads MTKMAKMIDERQQELTHQEHRVMLVNSMNTVKELLPVLISA. Tandem repeats lie at residues 259 to 369, 370 to 479, and 480 to 589. The tract at residues 259-589 is 3 X 112 AA tandem repeats; that stretch reads ASKDTEAMKR…LKDLKARMQE (331 aa). Phosphotyrosine occurs at positions 537 and 822. The segment at 836-878 is linker (Pro-rich); the sequence is QPQEPDFPPPPPDLEHLHLTDELAPPKPPLPEGEVPPPRPPPP. Residues 837 to 888 are disordered; it reads PQEPDFPPPPPDLEHLHLTDELAPPKPPLPEGEVPPPRPPPPEEKDEEFPEQ. Positions 860–876 are enriched in pro residues; it reads PPKPPLPEGEVPPPRPP. Residues 879–1135 form a C-terminal tail region; sequence EEKDEEFPEQ…RWVRKTPWYQ (257 aa). Facilitates phospholipid membrane insertion regions lie at residues 1004 to 1047 and 1121 to 1135; these read RLVR…KRIR and AGFT…PWYQ. Tyrosine 1134 is modified (phosphotyrosine; by SRC-type Tyr-kinases).

Belongs to the vinculin/alpha-catenin family. As to quaternary structure, exhibits self-association properties. Interacts with APBB1IP, NRAP and TLN1. Interacts with CTNNB1 and this interaction is necessary for its localization to the cell-cell junctions and for its function in regulating cell surface expression of E-cadherin. In terms of processing, phosphorylated; on serines, threonines and tyrosines. Phosphorylation on Tyr-1134 in activated platelets affects head-tail interactions and cell spreading but has no effect on actin binding nor on localization to focal adhesion plaques. Post-translationally, acetylated; mainly by myristic acid but also by a small amount of palmitic acid. In terms of tissue distribution, isoform Metavinculin is muscle-specific.

Its subcellular location is the cell membrane. It localises to the cell junction. The protein resides in the adherens junction. The protein localises to the focal adhesion. It is found in the cytoplasm. Its subcellular location is the cytoskeleton. It localises to the sarcolemma. The protein resides in the cell projection. The protein localises to the podosome. Actin filament (F-actin)-binding protein involved in cell-matrix adhesion and cell-cell adhesion. Regulates cell-surface E-cadherin expression and potentiates mechanosensing by the E-cadherin complex. May also play important roles in cell morphology and locomotion. The chain is Vinculin (VCL) from Gallus gallus (Chicken).